A 413-amino-acid polypeptide reads, in one-letter code: Multidrug resistance protein MdtA (413 aa).

Residues 1 to 20 (MKGSNTFRWAIAIGVVVAAA) form the signal peptide. 2 disordered regions span residues 31-57 (SPTAAPGVAAQAPHTASAGRRGMRDGP) and 391-413 (EPQTTVADEKSPSRHEGQKGARA). A compositionally biased stretch (basic and acidic residues) spans 397-413 (ADEKSPSRHEGQKGARA).

It belongs to the membrane fusion protein (MFP) (TC 8.A.1) family. Part of a tripartite efflux system composed of MdtA, MdtB and MdtC.

Its subcellular location is the cell inner membrane. The chain is Multidrug resistance protein MdtA from Salmonella typhimurium (strain LT2 / SGSC1412 / ATCC 700720).